The sequence spans 1358 residues: DNA-directed RNA polymerase subunit beta (1358 aa).

Belongs to the RNA polymerase beta chain family. As to quaternary structure, the RNAP catalytic core consists of 2 alpha, 1 beta, 1 beta' and 1 omega subunit. When a sigma factor is associated with the core the holoenzyme is formed, which can initiate transcription.

The catalysed reaction is RNA(n) + a ribonucleoside 5'-triphosphate = RNA(n+1) + diphosphate. Functionally, DNA-dependent RNA polymerase catalyzes the transcription of DNA into RNA using the four ribonucleoside triphosphates as substrates. The chain is DNA-directed RNA polymerase subunit beta from Francisella philomiragia subsp. philomiragia (strain ATCC 25017 / CCUG 19701 / FSC 153 / O#319-036).